A 156-amino-acid polypeptide reads, in one-letter code: Transcription elongation factor GreA (156 aa).

Residues 1 to 32 (MKKVRLTREGYEKLKKELEDLKRKFMYEISER) adopt a coiled-coil conformation.

Belongs to the GreA/GreB family.

In terms of biological role, necessary for efficient RNA polymerase transcription elongation past template-encoded arresting sites. The arresting sites in DNA have the property of trapping a certain fraction of elongating RNA polymerases that pass through, resulting in locked ternary complexes. Cleavage of the nascent transcript by cleavage factors such as GreA or GreB allows the resumption of elongation from the new 3'terminus. GreA releases sequences of 2 to 3 nucleotides. This Thermotoga maritima (strain ATCC 43589 / DSM 3109 / JCM 10099 / NBRC 100826 / MSB8) protein is Transcription elongation factor GreA.